The following is a 249-amino-acid chain: LexA repressor (249 aa).

Positions 1-25 (MAAAATGGRATSQPKKTTKGLTPRQ) are disordered. A DNA-binding region (H-T-H motif) is located at residues 45 to 65 (MREIGDTVGLASLSSVTHQLS). Residues serine 173 and lysine 210 each act as for autocatalytic cleavage activity in the active site.

It belongs to the peptidase S24 family. In terms of assembly, homodimer.

It carries out the reaction Hydrolysis of Ala-|-Gly bond in repressor LexA.. In terms of biological role, represses a number of genes involved in the response to DNA damage (SOS response), including recA and lexA. In the presence of single-stranded DNA, RecA interacts with LexA causing an autocatalytic cleavage which disrupts the DNA-binding part of LexA, leading to derepression of the SOS regulon and eventually DNA repair. This is LexA repressor from Pseudarthrobacter chlorophenolicus (strain ATCC 700700 / DSM 12829 / CIP 107037 / JCM 12360 / KCTC 9906 / NCIMB 13794 / A6) (Arthrobacter chlorophenolicus).